The chain runs to 2364 residues: Cytotoxin-L (2364 aa).

Residues 1 to 91 (MNLVNKAQLQ…EVLELKNNSL (91 aa)) are four-helical bundle. Positions 96–468 (KNLHFIWIGG…APDVRSTINL (373 aa)) constitute a GT44 domain. The tract at residues 96–468 (KNLHFIWIGG…APDVRSTINL (373 aa)) is glucosyltransferase region. UDP-alpha-D-glucose is bound by residues 101–103 (IWI), N139, 265–270 (LAAASD), and 286–288 (DVD). Mg(2+) is bound by residues D288, E515, and S518. Position 518 to 520 (518 to 520 (SLW)) interacts with UDP-alpha-D-glucose. An autoprocessing region region spans residues 544 to 799 (GEDDNLDFAQ…KSKYLHELST (256 aa)). Positions 545 and 546 each coordinate Zn(2+). Positions 567–774 (LSSMKTRNKE…EESIIKDISS (208 aa)) constitute a Peptidase C80 domain. 1D-myo-inositol hexakisphosphate contacts are provided by Y577, K600, and K647. Residue H653 participates in Zn(2+) binding. H653 acts as the For protease activity in catalysis. C698 serves as the catalytic Nucleophile; for protease activity. H757 is a Zn(2+) binding site. Residues K764, K775, and K792 each contribute to the 1D-myo-inositol hexakisphosphate site. The segment at 800–1500 (LLQEIRNNAN…ESIIRNIYMP (701 aa)) is translocation region. Interaction with host SEMA6A and SEMA6B stretches follow at residues 1433 to 1438 (CMKLIE), 1466 to 1471 (DNETKY), 1484 to 1495 (FTAEFSNESIIR), 1504 to 1511 (NLFIYSSK), and 1596 to 1601 (YNNLDP). 20 Cell wall-binding repeats span residues 1813 to 1832 (EFGL…FGNM), 1833 to 1852 (VSGL…PKNN), 1854 to 1873 (ITGF…TKSG), 1876 to 1895 (SIGE…QGIL), 1926 to 1945 (FIGK…NYRA), 1946 to 1965 (AVEW…KTGE), 1967 to 1986 (LKGL…NGIM), 1987 to 2006 (QTGF…DGVM), 2007 to 2026 (QVGY…NGER), 2057 to 2076 (YNGI…SNTA), 2077 to 2097 (VVGW…NRAE), 2099 to 2118 (CIGL…NGIR), 2119 to 2138 (QLGF…SGKI), 2139 to 2158 (ELGY…SGLV), 2209 to 2224 (ETGW…YFDP), 2227 to 2249 (KKAY…NGIM), 2250 to 2269 (RTGL…DGKM), 2270 to 2289 (QFGY…DGKM), 2320 to 2339 (YTGW…EYIA), and 2340 to 2359 (ATGS…DTAE). The tract at residues 1835-2364 (GLIYINDSLY…PDTAELVVSE (530 aa)) is receptor-binding (CROPS) region.

The protein belongs to the clostridial glucosylating toxin (LCGT) family. In terms of assembly, homomultimer; forms an inactive homomultimer at pH 8, which dissociates at pH 4, leading to cytotoxicity. Interacts with host SEMA6A; interaction promotes toxin entry into host cell. Interacts with host SEMA6B; interaction promotes toxin entry into host cell. Requires Zn(2+) as cofactor. Mn(2+) is required as a cofactor. It depends on Mg(2+) as a cofactor. Undergoes autocatalytic cleavage to release the N-terminal part (Glucosyltransferase TcsL), which constitutes the active part of the toxin, in the host cytosol. 1D-myo-inositol hexakisphosphate-binding (InsP6) activates the peptidase C80 domain and promotes autoprocessing.

Its subcellular location is the secreted. The protein resides in the host endosome membrane. The protein localises to the host cytoplasm. It is found in the host cytosol. It localises to the host cell membrane. It catalyses the reaction L-threonyl-[protein] + UDP-alpha-D-glucose = 3-O-(alpha-D-glucosyl)-L-threonyl-[protein] + UDP + H(+). Its activity is regulated as follows. Protease activity is activated upon binding to 1D-myo-inositol hexakisphosphate (InsP6), which induces conformational reorganization. In terms of biological role, precursor of a cytotoxin that targets the vascular endothelium, inducing an anti-inflammatory effect and resulting in lethal toxic shock syndrome. TcsL constitutes the main toxin that mediates the pathology of P.sordellii infection, an anaerobic Gram-positive bacterium found in soil and in the gastrointestinal and vaginal tracts of animals and humans; although the majority of carriers are asymptomatic, pathogenic P.sordellii infections arise rapidly and are highly lethal. This form constitutes the precursor of the toxin: it enters into host cells and mediates autoprocessing to release the active toxin (Glucosyltransferase TcsL) into the host cytosol. Targets vascular endothelium by binding to the semaphorin proteins SEMA6A and SEMA6B, and enters host cells via clathrin-mediated endocytosis. Once entered into host cells, acidification in the endosome promotes the membrane insertion of the translocation region and formation of a pore, leading to translocation of the GT44 and peptidase C80 domains across the endosomal membrane. This activates the peptidase C80 domain and autocatalytic processing, releasing the N-terminal part (Glucosyltransferase TcsL), which constitutes the active part of the toxin, in the cytosol. Its function is as follows. Active form of the toxin, which is released into the host cytosol following autoprocessing and inactivates small GTPases. Acts by mediating monoglucosylation of small GTPases of the Ras (H-Ras/HRAS, K-Ras/KRAS, N-Ras/NRAS and Ral/RALA) family in host cells at the conserved threonine residue located in the switch I region ('Thr-37/35'), using UDP-alpha-D-glucose as the sugar donor. Also able to catalyze monoglucosylation of some members of the Rho family (Rac1 and Rap2A), but with less efficiency than with Ras proteins. Monoglucosylation of host small GTPases completely prevents the recognition of the downstream effector, blocking the GTPases in their inactive form and leading to apoptosis. Induces an anti-inflammatory effect, mainly by inactivating Ras proteins which results in blockage of the cell cycle and killing of immune cells. The absence or moderate local inflammatory response allows C.sordellii spreading in deep tissues, production of toxin which is released in the general circulation and causes a toxic shock syndrome. This chain is Cytotoxin-L, found in Paraclostridium sordellii (Clostridium sordellii).